Here is a 582-residue protein sequence, read N- to C-terminus: Heterogeneous nuclear ribonucleoprotein C homolog (582 aa).

A disordered region spans residues 1-21; that stretch reads MSEALETGDPSPPPPIVSENG. C2H2-type zinc fingers lie at residues 102–125, 130–154, and 213–235; these read YYCC…RGYH, SSCD…RRTH, and YACL…VEMH.

Its subcellular location is the nucleus. This Caenorhabditis elegans protein is Heterogeneous nuclear ribonucleoprotein C homolog.